The primary structure comprises 145 residues: D-aminoacyl-tRNA deacylase (145 aa).

The Gly-cisPro motif, important for rejection of L-amino acids signature appears at 137 to 138 (GP).

This sequence belongs to the DTD family. As to quaternary structure, homodimer.

It is found in the cytoplasm. The enzyme catalyses glycyl-tRNA(Ala) + H2O = tRNA(Ala) + glycine + H(+). It catalyses the reaction a D-aminoacyl-tRNA + H2O = a tRNA + a D-alpha-amino acid + H(+). Its function is as follows. An aminoacyl-tRNA editing enzyme that deacylates mischarged D-aminoacyl-tRNAs. Also deacylates mischarged glycyl-tRNA(Ala), protecting cells against glycine mischarging by AlaRS. Acts via tRNA-based rather than protein-based catalysis; rejects L-amino acids rather than detecting D-amino acids in the active site. By recycling D-aminoacyl-tRNA to D-amino acids and free tRNA molecules, this enzyme counteracts the toxicity associated with the formation of D-aminoacyl-tRNA entities in vivo and helps enforce protein L-homochirality. This is D-aminoacyl-tRNA deacylase from Pseudomonas putida (strain GB-1).